Consider the following 121-residue polypeptide: Small ribosomal subunit protein uS13 (121 aa).

The interval 92–121 (RKGLPMRGQRTRTNARTRKGPRRAAQALKK) is disordered.

Belongs to the universal ribosomal protein uS13 family. In terms of assembly, part of the 30S ribosomal subunit. Forms a loose heterodimer with protein S19. Forms two bridges to the 50S subunit in the 70S ribosome.

Located at the top of the head of the 30S subunit, it contacts several helices of the 16S rRNA. In the 70S ribosome it contacts the 23S rRNA (bridge B1a) and protein L5 of the 50S subunit (bridge B1b), connecting the 2 subunits; these bridges are implicated in subunit movement. Contacts the tRNAs in the A and P-sites. The sequence is that of Small ribosomal subunit protein uS13 from Burkholderia cenocepacia (strain HI2424).